A 119-amino-acid polypeptide reads, in one-letter code: Ribosome-binding factor A (119 aa).

It belongs to the RbfA family. In terms of assembly, monomer. Binds 30S ribosomal subunits, but not 50S ribosomal subunits or 70S ribosomes.

The protein localises to the cytoplasm. Its function is as follows. One of several proteins that assist in the late maturation steps of the functional core of the 30S ribosomal subunit. Associates with free 30S ribosomal subunits (but not with 30S subunits that are part of 70S ribosomes or polysomes). Required for efficient processing of 16S rRNA. May interact with the 5'-terminal helix region of 16S rRNA. The polypeptide is Ribosome-binding factor A (Pseudothermotoga lettingae (strain ATCC BAA-301 / DSM 14385 / NBRC 107922 / TMO) (Thermotoga lettingae)).